The chain runs to 337 residues: Ornithine carbamoyltransferase, catabolic (337 aa).

Residues 57 to 60, Gln-84, Arg-108, and 135 to 138 each bind carbamoyl phosphate; these read STRT and HPTQ. Residues Asn-167, Asp-231, and 235 to 236 contribute to the L-ornithine site; that span reads SM. Carbamoyl phosphate contacts are provided by residues 272 to 273 and Arg-317; that span reads CL.

Belongs to the aspartate/ornithine carbamoyltransferase superfamily. OTCase family.

It localises to the cytoplasm. It catalyses the reaction carbamoyl phosphate + L-ornithine = L-citrulline + phosphate + H(+). The protein operates within amino-acid degradation; L-arginine degradation via ADI pathway; carbamoyl phosphate from L-arginine: step 2/2. In terms of biological role, reversibly catalyzes the transfer of the carbamoyl group from carbamoyl phosphate (CP) to the N(epsilon) atom of ornithine (ORN) to produce L-citrulline. This chain is Ornithine carbamoyltransferase, catabolic, found in Streptococcus suis (strain 89/1591).